A 340-amino-acid chain; its full sequence is tRNA (cytosine(34)-C(5))-methyltransferase, mitochondrial (340 aa).

Residues 139–145 (CAAPGGK), Glu-162, Asp-193, and Asp-211 each bind S-adenosyl-L-methionine. The Nucleophile role is filled by Cys-265.

This sequence belongs to the class I-like SAM-binding methyltransferase superfamily. RsmB/NOP family.

Its subcellular location is the mitochondrion matrix. The catalysed reaction is cytidine(34) in mitochondrial tRNA + S-adenosyl-L-methionine = 5-methylcytidine(34) in mitochondrial tRNA + S-adenosyl-L-homocysteine + H(+). Mitochondrial tRNA methyltransferase that mediates methylation of cytosine to 5-methylcytosine (m5C) at position 34 of mt-tRNA(Met). mt-tRNA(Met) methylation at cytosine(34) takes place at the wobble position of the anticodon and initiates the formation of 5-formylcytosine (f(5)c) at this position. mt-tRNA(Met) containing the f(5)c modification at the wobble position enables recognition of the AUA codon in addition to the AUG codon, expanding codon recognition in mitochondrial translation. This Homo sapiens (Human) protein is tRNA (cytosine(34)-C(5))-methyltransferase, mitochondrial.